Reading from the N-terminus, the 352-residue chain is MTAILERRENSSLWARFCEWITSTENRLYIGWFGVIMIPCLLTATSVFIIAFIAAPPVDIDGIREPVSGSLLYGNNIITGAVIPTSNAIGLHFYPIWEAASLDEWLYNGGPYQLIVCHFLLGVYCYMGREWELSFRLGMRPWIAVAYSAPVAAASAVFLVYPIGQGSFSDGMPLGISGTFNFMIVFQAEHNILMHPFHMLGVAGVFGGSLFSAMHGSLVTSSLIRETTENESANEGYRFGQEEETYNIVAAHGYFGRLIFQYASFNNSRSLHFFLAAWPVIGIWFTALGLSTMAFNLNGFNFNQSVVDSQGRVLNTWADIINRANLGMEVMHERNAHNFPLDLASTNSSSNN.

T2 carries the N-acetylthreonine modification. A Phosphothreonine modification is found at T2. 3 consecutive transmembrane segments (helical) span residues Y29 to S46, H118 to L133, and W142 to A156. H118 is a binding site for chlorophyll a. Position 126 (Y126) interacts with pheophytin a. [CaMn4O5] cluster-binding residues include D170 and E189. A helical membrane pass occupies residues F197 to L218. H198 is a binding site for chlorophyll a. Residues H215 and S264 to F265 contribute to the a quinone site. Position 215 (H215) interacts with Fe cation. H272 contributes to the Fe cation binding site. A helical membrane pass occupies residues F274–L288. [CaMn4O5] cluster is bound by residues H332, E333, D342, and A344. Positions S345–N352 are excised as a propeptide.

Belongs to the reaction center PufL/M/PsbA/D family. As to quaternary structure, PSII is composed of 1 copy each of membrane proteins PsbA, PsbB, PsbC, PsbD, PsbE, PsbF, PsbH, PsbI, PsbJ, PsbK, PsbL, PsbM, PsbT, PsbX, PsbY, PsbZ, Psb30/Ycf12, at least 3 peripheral proteins of the oxygen-evolving complex and a large number of cofactors. It forms dimeric complexes. The D1/D2 heterodimer binds P680, chlorophylls that are the primary electron donor of PSII, and subsequent electron acceptors. It shares a non-heme iron and each subunit binds pheophytin, quinone, additional chlorophylls, carotenoids and lipids. D1 provides most of the ligands for the Mn4-Ca-O5 cluster of the oxygen-evolving complex (OEC). There is also a Cl(-1) ion associated with D1 and D2, which is required for oxygen evolution. The PSII complex binds additional chlorophylls, carotenoids and specific lipids. is required as a cofactor. In terms of processing, tyr-161 forms a radical intermediate that is referred to as redox-active TyrZ, YZ or Y-Z. C-terminally processed by CTPA; processing is essential to allow assembly of the oxygen-evolving complex and thus photosynthetic growth.

It is found in the plastid. The protein localises to the chloroplast thylakoid membrane. The enzyme catalyses 2 a plastoquinone + 4 hnu + 2 H2O = 2 a plastoquinol + O2. Its function is as follows. This is one of the two reaction center proteins of photosystem II. Photosystem II (PSII) is a light-driven water:plastoquinone oxidoreductase that uses light energy to abstract electrons from H(2)O, generating O(2) and a proton gradient subsequently used for ATP formation. It consists of a core antenna complex that captures photons, and an electron transfer chain that converts photonic excitation into a charge separation. The D1/D2 (PsbA/PsbD) reaction center heterodimer binds P680, the primary electron donor of PSII as well as several subsequent electron acceptors. This is Photosystem II protein D1 from Chlamydomonas reinhardtii (Chlamydomonas smithii).